We begin with the raw amino-acid sequence, 353 residues long: Protein MGF 360-10L (353 aa).

The stretch at 57-89 (DLNTALMLATKENNYQLIKLFTEWGADINYGLI) is one ANK repeat. Residue N172 is glycosylated (N-linked (GlcNAc...) asparagine; by host). 2 consecutive transmembrane segments (helical) span residues 206 to 228 (LNTW…NLYE) and 249 to 271 (NFLT…IASI). Residue N342 is glycosylated (N-linked (GlcNAc...) asparagine; by host).

The protein belongs to the asfivirus MGF 360 family.

It localises to the host membrane. In terms of biological role, plays a role in virus cell tropism, and may be required for efficient virus replication in macrophages. This is Protein MGF 360-10L from African swine fever virus (isolate Warthog/Namibia/Wart80/1980) (ASFV).